A 175-amino-acid chain; its full sequence is Probable RNA-binding protein EIF1AD (175 aa).

The S1-like domain occupies 5–89; sequence TKKRYITNKV…VKGEIEYILD (85 aa). Over residues 116 to 128 the composition is skewed to basic and acidic residues; that stretch reads EAKRGQTSDKMID. Residues 116–175 are disordered; it reads EAKRGQTSDKMIDDDMLPPSESEEEDESEGEETYDEDDVDDEEEEEFDTYNPNRMQAPSK. Acidic residues predominate over residues 129–163; it reads DDMLPPSESEEEDESEGEETYDEDDVDDEEEEEFD. Polar residues predominate over residues 165-175; it reads YNPNRMQAPSK.

The protein belongs to the EIF1AD family.

In Caenorhabditis elegans, this protein is Probable RNA-binding protein EIF1AD.